A 543-amino-acid polypeptide reads, in one-letter code: Chaperonin GroEL 7 (543 aa).

ATP-binding positions include 30 to 33, Lys-51, 87 to 91, Gly-415, and Asp-496; these read TLGP and DGTTT.

The protein belongs to the chaperonin (HSP60) family. Forms a cylinder of 14 subunits composed of two heptameric rings stacked back-to-back. Interacts with the co-chaperonin GroES.

The protein localises to the cytoplasm. The catalysed reaction is ATP + H2O + a folded polypeptide = ADP + phosphate + an unfolded polypeptide.. In terms of biological role, together with its co-chaperonin GroES, plays an essential role in assisting protein folding. The GroEL-GroES system forms a nano-cage that allows encapsulation of the non-native substrate proteins and provides a physical environment optimized to promote and accelerate protein folding. In Bradyrhizobium diazoefficiens (strain JCM 10833 / BCRC 13528 / IAM 13628 / NBRC 14792 / USDA 110), this protein is Chaperonin GroEL 7.